The primary structure comprises 386 residues: Cytochrome b (386 aa).

4 consecutive transmembrane segments (helical) span residues 32-52 (FGSL…TLAM), 76-98 (WLIR…LHMG), 113-133 (TWNI…LGYV), and 179-199 (FFSL…MHLI). 2 residues coordinate heme b: H82 and H96. Heme b contacts are provided by H183 and H197. Residue H202 participates in a ubiquinone binding. The next 4 membrane-spanning stretches (helical) occupy residues 226 to 246 (FLFK…IFVL), 290 to 310 (TLGV…PYLD), 322 to 342 (LSKI…ILGA), and 349 to 369 (FIIF…IITP).

This sequence belongs to the cytochrome b family. Fungal cytochrome b-c1 complex contains 10 subunits; 3 respiratory subunits, 2 core proteins and 5 low-molecular weight proteins. Cytochrome b-c1 complex is a homodimer. Requires heme b as cofactor.

It localises to the mitochondrion inner membrane. Its function is as follows. Component of the ubiquinol-cytochrome c reductase complex (complex III or cytochrome b-c1 complex) that is part of the mitochondrial respiratory chain. The b-c1 complex mediates electron transfer from ubiquinol to cytochrome c. Contributes to the generation of a proton gradient across the mitochondrial membrane that is then used for ATP synthesis. This is Cytochrome b (COB) from Trichophyton rubrum (Athlete's foot fungus).